A 370-amino-acid polypeptide reads, in one-letter code: Serine/threonine-protein kinase RIM11/MSD1 (370 aa).

A Protein kinase domain is found at 39-322; the sequence is FPTTEVVGHG…ALQCLCSPYF (284 aa). Residues 45 to 53 and Lys68 each bind ATP; that span reads VGHGSFGVV. Asp164 serves as the catalytic Proton acceptor. Tyr199 bears the Phosphotyrosine mark.

It belongs to the protein kinase superfamily. CMGC Ser/Thr protein kinase family. GSK-3 subfamily. As to quaternary structure, interacts with TDA1.

It catalyses the reaction L-seryl-[protein] + ATP = O-phospho-L-seryl-[protein] + ADP + H(+). The enzyme catalyses L-threonyl-[protein] + ATP = O-phospho-L-threonyl-[protein] + ADP + H(+). Its function is as follows. Serine/threonine protein kinase that is thought to function in regulating kinetochore activity and entry into meiosis. Could phosphorylate IME1. This chain is Serine/threonine-protein kinase RIM11/MSD1 (RIM11), found in Saccharomyces cerevisiae (strain ATCC 204508 / S288c) (Baker's yeast).